The chain runs to 110 residues: DNA-directed RNA polymerase subunit omega (110 aa).

Belongs to the RNA polymerase subunit omega family. The RNAP catalytic core consists of 2 alpha, 1 beta, 1 beta' and 1 omega subunit. When a sigma factor is associated with the core the holoenzyme is formed, which can initiate transcription.

It catalyses the reaction RNA(n) + a ribonucleoside 5'-triphosphate = RNA(n+1) + diphosphate. Promotes RNA polymerase assembly. Latches the N- and C-terminal regions of the beta' subunit thereby facilitating its interaction with the beta and alpha subunits. This Mycobacterium bovis (strain ATCC BAA-935 / AF2122/97) protein is DNA-directed RNA polymerase subunit omega (rpoZ).